Reading from the N-terminus, the 206-residue chain is Small ribosomal subunit protein uS4 (206 aa).

The S4 RNA-binding domain maps to 96–156; sequence GRLDNVVYRM…EKAKKQSRVK (61 aa).

It belongs to the universal ribosomal protein uS4 family. In terms of assembly, part of the 30S ribosomal subunit. Contacts protein S5. The interaction surface between S4 and S5 is involved in control of translational fidelity.

In terms of biological role, one of the primary rRNA binding proteins, it binds directly to 16S rRNA where it nucleates assembly of the body of the 30S subunit. Functionally, with S5 and S12 plays an important role in translational accuracy. This chain is Small ribosomal subunit protein uS4, found in Enterobacter sp. (strain 638).